The chain runs to 274 residues: UPF0173 metal-dependent hydrolase A2cp1_1196 (274 aa).

It belongs to the UPF0173 family.

The polypeptide is UPF0173 metal-dependent hydrolase A2cp1_1196 (Anaeromyxobacter dehalogenans (strain 2CP-1 / ATCC BAA-258)).